An 860-amino-acid chain; its full sequence is Envelope glycoprotein gp160 (860 aa).

The N-terminal stretch at 1 to 22 (MEPGRNQLFVVILLTSACLVYC) is a signal peptide. Residues 23 to 678 (SQYVTVFYGI…LTSWVKYIQY (656 aa)) lie on the Extracellular side of the membrane. Residue Asn37 is glycosylated (N-linked (GlcNAc...) asparagine; by host). Cysteines 44 and 57 form a disulfide. 21 N-linked (GlcNAc...) asparagine; by host glycosylation sites follow: Asn70, Asn79, Asn112, Asn119, Asn144, Asn152, Asn194, Asn206, Asn238, Asn241, Asn272, Asn278, Asn289, Asn300, Asn310, Asn365, Asn371, Asn398, Asn410, Asn460, and Asn465. 5 disulfides stabilise this stretch: Cys101-Cys214, Cys108-Cys205, Cys113-Cys166, Cys227-Cys257, and Cys237-Cys249. Residues 113-165 (CSRVQGNTTTPNPRTSSSTTSRPPTSAASIINETSNCIENNTCAGLGYEEMMQ) are V1. The segment at 118–139 (GNTTTPNPRTSSSTTSRPPTSA) is disordered. The span at 119–139 (NTTTPNPRTSSSTTSRPPTSA) shows a compositional bias: low complexity. The interval 166 to 205 (CEFNMKGLEQDKKRRYKDTWYLEDVVCDNTTAGTCYMRHC) is V2. The interval 305–337 (CKRPGNKTVLPITLMSGLVFHSQPINTRPRQAW) is V3. An intrachain disulfide couples Cys305 to Cys338. 2 disulfides stabilise this stretch: Cys390-Cys444 and Cys397-Cys417. Residues 397-417 (CNMTWFLNWVEDKNQTRRNYC) are V4. Residues 460–468 (NRTHTNITF) form a V5 region. The interval 511–531 (GVFVLGFLGFLATAGSAMGAR) is fusion peptide. The tract at residues 574–590 (LQARVTAIEKYLKHQAQ) is immunosuppression. N-linked (GlcNAc...) asparagine; by host glycosylation is found at Asn610, Asn619, and Asn635. Residues 623 to 644 (QEWEKQVRYLEANISQSLEEAQ) are a coiled coil. The tract at residues 656–677 (KLNSWDILGNWFDLTSWVKYIQ) is MPER; binding to GalCer. A helical transmembrane segment spans residues 679-699 (GVHIVVGIIALRIAIYVVQLL). Residues 700 to 860 (SRFRKGYRPV…IRQGAELALL (161 aa)) lie on the Cytoplasmic side of the membrane. Residues 706–709 (YRPV) carry the YXXV motif; contains endocytosis signal motif. A lipid anchor (S-palmitoyl cysteine; by host) is attached at Cys772. A Di-leucine internalization motif motif is present at residues 859–860 (LL).

In terms of assembly, the mature envelope protein (Env) consists of a homotrimer of non-covalently associated gp120-gp41 heterodimers. The resulting complex protrudes from the virus surface as a spike. There seems to be as few as 10 spikes on the average virion. Interacts with human CD4, CCR5 and CXCR4, to form a P4HB/PDI-CD4-CXCR4-gp120 complex. Gp120 also interacts with the C-type lectins CD209/DC-SIGN and CLEC4M/DC-SIGNR (collectively referred to as DC-SIGN(R)). Gp120 and gp41 interact with GalCer. The mature envelope protein (Env) consists of a homotrimer of non-covalently associated gp120-gp41 heterodimers. The resulting complex protrudes from the virus surface as a spike. There seems to be as few as 10 spikes on the average virion. Specific enzymatic cleavages in vivo yield mature proteins. Envelope glycoproteins are synthesized as an inactive precursor that is heavily N-glycosylated and processed likely by host cell furin in the Golgi to yield the mature SU and TM proteins. The cleavage site between SU and TM requires the minimal sequence [KR]-X-[KR]-R. Post-translationally, palmitoylation of the transmembrane protein and of Env polyprotein (prior to its proteolytic cleavage) is essential for their association with host cell membrane lipid rafts. Palmitoylation is therefore required for envelope trafficking to classical lipid rafts, but not for viral replication.

The protein resides in the virion membrane. It localises to the host cell membrane. It is found in the host endosome membrane. Its function is as follows. The surface protein gp120 (SU) attaches the virus to the host lymphoid cell by binding to the primary receptor CD4. This interaction induces a structural rearrangement creating a high affinity binding site for a chemokine coreceptor like CXCR4 and/or CCR5. This peculiar 2 stage receptor-interaction strategy allows gp120 to maintain the highly conserved coreceptor-binding site in a cryptic conformation, protected from neutralizing antibodies. Since CD4 also displays a binding site for the disulfide-isomerase P4HB/PDI, a P4HB/PDI-CD4-CXCR4-gp120 complex may form. In that complex, P4HB/PDI could reach and reduce gp120 disulfide bonds, causing major conformational changes in gp120. TXN, another PDI family member could also be involved in disulfide rearrangements in Env during fusion. These changes are transmitted to the transmembrane protein gp41 and are thought to activate its fusogenic potential by unmasking its fusion peptide. The surface protein gp120 is a ligand for CD209/DC-SIGN and CLEC4M/DC-SIGNR, which are respectively found on dendritic cells (DCs), and on endothelial cells of liver sinusoids and lymph node sinuses. These interactions allow capture of viral particles at mucosal surfaces by these cells and subsequent transmission to permissive cells. DCs are professional antigen presenting cells, critical for host immunity by inducing specific immune responses against a broad variety of pathogens. They act as sentinels in various tissues where they take up antigen, process it, and present it to T-cells following migration to lymphoid organs. HIV subverts the migration properties of dendritic cells to gain access to CD4+ T-cells in lymph nodes. Virus transmission to permissive T-cells occurs either in trans (without DCs infection, through viral capture and transmission), or in cis (following DCs productive infection, through the usual CD4-gp120 interaction), thereby inducing a robust infection. In trans infection, bound virions remain infectious over days and it is proposed that they are not degraded, but protected in non-lysosomal acidic organelles within the DCs close to the cell membrane thus contributing to the viral infectious potential during DCs' migration from the periphery to the lymphoid tissues. On arrival at lymphoid tissues, intact virions recycle back to DCs' cell surface allowing virus transmission to CD4+ T-cells. Virion capture also seems to lead to MHC-II-restricted viral antigen presentation, and probably to the activation of HIV-specific CD4+ cells. Functionally, the transmembrane protein gp41 (TM) acts as a class I viral fusion protein. Under the current model, the protein has at least 3 conformational states: pre-fusion native state, pre-hairpin intermediate state, and post-fusion hairpin state. During fusion of viral and target intracellular membranes, the coiled coil regions (heptad repeats) assume a trimer-of-hairpins structure, positioning the fusion peptide in close proximity to the C-terminal region of the ectodomain. The formation of this structure appears to drive apposition and subsequent fusion of viral and target cell membranes. Complete fusion occurs in host cell endosomes and is dynamin-dependent, however some lipid transfer might occur at the plasma membrane. The virus undergoes clathrin-dependent internalization long before endosomal fusion, thus minimizing the surface exposure of conserved viral epitopes during fusion and reducing the efficacy of inhibitors targeting these epitopes. Membranes fusion leads to delivery of the nucleocapsid into the cytoplasm. In terms of biological role, the envelope glycoprotein gp160 precursor down-modulates cell surface CD4 antigen by interacting with it in the endoplasmic reticulum and blocking its transport to the cell surface. Its function is as follows. The gp120-gp41 heterodimer seems to contribute to T-cell depletion during HIV-1 infection. The envelope glycoproteins expressed on the surface of infected cells induce apoptosis through an interaction with uninfected cells expressing the receptor (CD4) and the coreceptors CXCR4 or CCR5. This type of bystander killing may be obtained by at least three distinct mechanisms. First, the interaction between the 2 cells can induce cellular fusion followed by nuclear fusion within the syncytium. Syncytia are condemned to die from apoptosis. Second, the 2 interacting cells may not fuse entirely and simply exchange plasma membrane lipids, after a sort of hemifusion process, followed by rapid death. Third, it is possible that virus-infected cells, on the point of undergoing apoptosis, fuse with CD4-expressing cells, in which case apoptosis is rapidly transmitted from one cell to the other and thus occurs in a sort of contagious fashion. The gp120-gp41 heterodimer allows rapid transcytosis of the virus through CD4 negative cells such as simple epithelial monolayers of the intestinal, rectal and endocervical epithelial barriers. Both gp120 and gp41 specifically recognize glycosphingolipids galactosyl-ceramide (GalCer) or 3' sulfo-galactosyl-ceramide (GalS) present in the lipid rafts structures of epithelial cells. Binding to these alternative receptors allows the rapid transcytosis of the virus through the epithelial cells. This transcytotic vesicle-mediated transport of virions from the apical side to the basolateral side of the epithelial cells does not involve infection of the cells themselves. In Homo sapiens (Human), this protein is Envelope glycoprotein gp160 (env).